Reading from the N-terminus, the 485-residue chain is Aspartyl/glutamyl-tRNA(Asn/Gln) amidotransferase subunit B (485 aa).

Belongs to the GatB/GatE family. GatB subfamily. In terms of assembly, heterotrimer of A, B and C subunits.

The enzyme catalyses L-glutamyl-tRNA(Gln) + L-glutamine + ATP + H2O = L-glutaminyl-tRNA(Gln) + L-glutamate + ADP + phosphate + H(+). It carries out the reaction L-aspartyl-tRNA(Asn) + L-glutamine + ATP + H2O = L-asparaginyl-tRNA(Asn) + L-glutamate + ADP + phosphate + 2 H(+). Allows the formation of correctly charged Asn-tRNA(Asn) or Gln-tRNA(Gln) through the transamidation of misacylated Asp-tRNA(Asn) or Glu-tRNA(Gln) in organisms which lack either or both of asparaginyl-tRNA or glutaminyl-tRNA synthetases. The reaction takes place in the presence of glutamine and ATP through an activated phospho-Asp-tRNA(Asn) or phospho-Glu-tRNA(Gln). The polypeptide is Aspartyl/glutamyl-tRNA(Asn/Gln) amidotransferase subunit B (Methylacidiphilum infernorum (isolate V4) (Methylokorus infernorum (strain V4))).